A 159-amino-acid polypeptide reads, in one-letter code: Nascent polypeptide-associated complex subunit beta (159 aa).

Disordered regions lie at residues 1–39 and 121–159; these read MDMEKLKRMQARGGVRTGDGKGTPRRKVKNVHKSTGMDD and ESYQSMQKAEGGEDKKDDDEDDDDIPDLVEGENFEDKVE. The span at 23 to 32 shows a compositional bias: basic residues; that stretch reads TPRRKVKNVH. Positions 36–101 constitute an NAC-A/B domain; that stretch reads GMDDKKLQTS…GEDKELTELV (66 aa). Positions 136–153 are enriched in acidic residues; it reads KDDDEDDDDIPDLVEGEN.

It belongs to the NAC-beta family. As to quaternary structure, part of the nascent polypeptide-associated complex (NAC), consisting of EGD2 and EGD1. NAC associates with ribosomes via EGD1.

It localises to the cytoplasm. The protein resides in the nucleus. Functionally, component of the nascent polypeptide-associated complex (NAC), a dynamic component of the ribosomal exit tunnel, protecting the emerging polypeptides from interaction with other cytoplasmic proteins to ensure appropriate nascent protein targeting. The NAC complex also promotes mitochondrial protein import by enhancing productive ribosome interactions with the outer mitochondrial membrane and blocks the inappropriate interaction of ribosomes translating non-secretory nascent polypeptides with translocation sites in the membrane of the endoplasmic reticulum. EGD1 may act as a transcription factor that exert a negative effect on the expression of several genes that are transcribed by RNA polymerase II. The sequence is that of Nascent polypeptide-associated complex subunit beta (egd1) from Botryotinia fuckeliana (strain B05.10) (Noble rot fungus).